The primary structure comprises 383 residues: MLYSPRLTDQILIVAGEASADLHAARTLHELQRLRPGITAFGVGGPRLREAGLEALAPAEDISVMGLAEVLPRIPRILGILRMLGRAAAERRPRAALLVDLPDFNLRLAARLKKLGIPVVYYVSPTIWAWRQGRAKKIARVVDRMLCILPFEERFYEGTGVSARFVGHPFAERPPPGPAEAYRSALGLPASRTTIAMVPGSRPSELKRLLPPMLQAAERLRAAHPDAQFVVPVAPTLDRAALEPYLAAHRTLEVRLVDGRTEEVVGASDAALVKSGTSTLEAGLMLRPMVVVYKLSWLSYAVARMLVKIAHVALVNILAGRGIVPELLQGDASPERMAAEVEHLLGDRAAREAQIAALREVRASLGEPGAPLRVAEEVLGVMR.

It belongs to the LpxB family.

It carries out the reaction a lipid X + a UDP-2-N,3-O-bis[(3R)-3-hydroxyacyl]-alpha-D-glucosamine = a lipid A disaccharide + UDP + H(+). It participates in bacterial outer membrane biogenesis; LPS lipid A biosynthesis. In terms of biological role, condensation of UDP-2,3-diacylglucosamine and 2,3-diacylglucosamine-1-phosphate to form lipid A disaccharide, a precursor of lipid A, a phosphorylated glycolipid that anchors the lipopolysaccharide to the outer membrane of the cell. The polypeptide is Lipid-A-disaccharide synthase (Anaeromyxobacter sp. (strain K)).